The chain runs to 118 residues: Large ribosomal subunit protein uL18 (118 aa).

This sequence belongs to the universal ribosomal protein uL18 family. In terms of assembly, part of the 50S ribosomal subunit; part of the 5S rRNA/L5/L18/L25 subcomplex. Contacts the 5S and 23S rRNAs.

Its function is as follows. This is one of the proteins that bind and probably mediate the attachment of the 5S RNA into the large ribosomal subunit, where it forms part of the central protuberance. This chain is Large ribosomal subunit protein uL18, found in Wolinella succinogenes (strain ATCC 29543 / DSM 1740 / CCUG 13145 / JCM 31913 / LMG 7466 / NCTC 11488 / FDC 602W) (Vibrio succinogenes).